We begin with the raw amino-acid sequence, 448 residues long: Tryptophan dimethylallyltransferase 1 (448 aa).

L-tryptophan-binding positions include 80-81 (IL) and glutamate 89. 3 residues coordinate substrate: arginine 100, lysine 186, and tyrosine 188. Tyrosine 190 and arginine 249 together coordinate L-tryptophan. 7 residues coordinate substrate: arginine 262, lysine 264, tyrosine 266, glutamine 348, tyrosine 350, tyrosine 414, and tyrosine 418.

This sequence belongs to the tryptophan dimethylallyltransferase family. Homodimer.

The enzyme catalyses L-tryptophan + dimethylallyl diphosphate = 4-(3-methylbut-2-enyl)-L-tryptophan + diphosphate. It functions in the pathway alkaloid biosynthesis; ergot alkaloid biosynthesis. Its function is as follows. Tryptophan dimethylallyltransferase; part of the gene cluster that mediates the biosynthesis of fungal ergot alkaloid. DmaW catalyzes the first step of ergot alkaloid biosynthesis by condensing dimethylallyl diphosphate (DMAP) and tryptophan to form 4-dimethylallyl-L-tryptophan. The second step is catalyzed by the methyltransferase easF that methylates 4-dimethylallyl-L-tryptophan in the presence of S-adenosyl-L-methionine, resulting in the formation of 4-dimethylallyl-L-abrine. The catalase easC and the FAD-dependent oxidoreductase easE then transform 4-dimethylallyl-L-abrine to chanoclavine-I which is further oxidized by easD in the presence of NAD(+), resulting in the formation of chanoclavine-I aldehyde. Agroclavine dehydrogenase easG then mediates the conversion of chanoclavine-I aldehyde to agroclavine via a non-enzymatic adduct reaction: the substrate is an iminium intermediate that is formed spontaneously from chanoclavine-I aldehyde in the presence of glutathione. The presence of easA is not required to complete this reaction. Further conversion of agroclavine to paspalic acid is a two-step process involving oxidation of agroclavine to elymoclavine and of elymoclavine to paspalic acid, the second step being performed by the elymoclavine oxidase cloA. Paspalic acid is then further converted to D-lysergic acid. Ergopeptines are assembled from D-lysergic acid and three different amino acids by the D-lysergyl-peptide-synthetases composed each of a monomudular and a trimodular nonribosomal peptide synthetase subunit. LpsB and lpsC encode the monomodular subunits responsible for D-lysergic acid activation and incorporation into the ergopeptine backbone. LpsA1 and A2 subunits encode the trimodular nonribosomal peptide synthetase assembling the tripeptide portion of ergopeptines. LpsA1 is responsible for formation of the major ergopeptine, ergotamine, and lpsA2 for alpha-ergocryptine, the minor ergopeptine of the total alkaloid mixture elaborated by C.purpurea. D-lysergyl-tripeptides are assembled by the nonribosomal peptide synthetases and released as N-(D-lysergyl-aminoacyl)-lactams. Cyclolization of the D-lysergyl-tripeptides is performed by the Fe(2+)/2-ketoglutarate-dependent dioxygenase easH which introduces a hydroxyl group into N-(D-lysergyl-aminoacyl)-lactam at alpha-C of the aminoacyl residue followed by spontaneous condensation with the terminal lactam carbonyl group. In Claviceps purpurea (Ergot fungus), this protein is Tryptophan dimethylallyltransferase 1.